The sequence spans 227 residues: MAYPFQLGLQDATSPIMEELTNFHDHTLMIVFLISSLVLYIISLMLTTKLTHTSTMDAQEVETIWTILPAVILILIALPSLRILYMMDEINNPVLTVKTMGHQWYWSYEYTDYKDLCFDSYMVPTNELKPGELRLLEVDNRVVLPMELPIRMLISSEDVLHSWAVPSLGLKTDAIPGRLNQATVTSNRPGLFYGQCSEICGSNHSFMPIVLEMVPLKHFENWSTSMI.

Residues 1–14 (MAYPFQLGLQDATS) lie on the Mitochondrial intermembrane side of the membrane. A helical transmembrane segment spans residues 15-45 (PIMEELTNFHDHTLMIVFLISSLVLYIISLM). Residues 46 to 59 (LTTKLTHTSTMDAQ) are Mitochondrial matrix-facing. The helical transmembrane segment at 60–87 (EVETIWTILPAVILILIALPSLRILYMM) threads the bilayer. The Mitochondrial intermembrane segment spans residues 88–227 (DEINNPVLTV…HFENWSTSMI (140 aa)). His161, Cys196, Glu198, Cys200, His204, and Met207 together coordinate Cu cation. Residue Glu198 participates in Mg(2+) binding.

The protein belongs to the cytochrome c oxidase subunit 2 family. As to quaternary structure, component of the cytochrome c oxidase (complex IV, CIV), a multisubunit enzyme composed of 14 subunits. The complex is composed of a catalytic core of 3 subunits MT-CO1, MT-CO2 and MT-CO3, encoded in the mitochondrial DNA, and 11 supernumerary subunits COX4I, COX5A, COX5B, COX6A, COX6B, COX6C, COX7A, COX7B, COX7C, COX8 and NDUFA4, which are encoded in the nuclear genome. The complex exists as a monomer or a dimer and forms supercomplexes (SCs) in the inner mitochondrial membrane with NADH-ubiquinone oxidoreductase (complex I, CI) and ubiquinol-cytochrome c oxidoreductase (cytochrome b-c1 complex, complex III, CIII), resulting in different assemblies (supercomplex SCI(1)III(2)IV(1) and megacomplex MCI(2)III(2)IV(2)). Found in a complex with TMEM177, COA6, COX18, COX20, SCO1 and SCO2. Interacts with TMEM177 in a COX20-dependent manner. Interacts with COX20. Interacts with COX16. Cu cation is required as a cofactor.

Its subcellular location is the mitochondrion inner membrane. It catalyses the reaction 4 Fe(II)-[cytochrome c] + O2 + 8 H(+)(in) = 4 Fe(III)-[cytochrome c] + 2 H2O + 4 H(+)(out). Functionally, component of the cytochrome c oxidase, the last enzyme in the mitochondrial electron transport chain which drives oxidative phosphorylation. The respiratory chain contains 3 multisubunit complexes succinate dehydrogenase (complex II, CII), ubiquinol-cytochrome c oxidoreductase (cytochrome b-c1 complex, complex III, CIII) and cytochrome c oxidase (complex IV, CIV), that cooperate to transfer electrons derived from NADH and succinate to molecular oxygen, creating an electrochemical gradient over the inner membrane that drives transmembrane transport and the ATP synthase. Cytochrome c oxidase is the component of the respiratory chain that catalyzes the reduction of oxygen to water. Electrons originating from reduced cytochrome c in the intermembrane space (IMS) are transferred via the dinuclear copper A center (CU(A)) of subunit 2 and heme A of subunit 1 to the active site in subunit 1, a binuclear center (BNC) formed by heme A3 and copper B (CU(B)). The BNC reduces molecular oxygen to 2 water molecules using 4 electrons from cytochrome c in the IMS and 4 protons from the mitochondrial matrix. This is Cytochrome c oxidase subunit 2 (MT-CO2) from Praomys taitae (Taita hill rat).